The chain runs to 905 residues: Patched domain-containing protein 3 (905 aa).

Positions 1–67 (MISSKVAPGE…PVGQEAPPPR (67 aa)) are disordered. The helical transmembrane segment at 94-114 (WLFLLGPVLLTASLGTGLIFL) threads the bilayer. 4 N-linked (GlcNAc...) asparagine glycosylation sites follow: N146, N199, N229, and N233. Transmembrane regions (helical) follow at residues 337 to 357 (TVIP…VVSC), 369 to 389 (VAVF…GLML), 391 to 411 (IGVP…GVGV), 441 to 461 (VAVS…TGIT), 475 to 495 (GTTL…IMAL), and 558 to 578 (FIVV…CFQV). In terms of domain architecture, SSD spans 338–495 (VIPLFHLAYI…ITCFGAIMAL (158 aa)). N647, N661, and N692 each carry an N-linked (GlcNAc...) asparagine glycan. Helical transmembrane passes span 759 to 779 (VMIA…HPVC), 781 to 801 (LWVT…MAFW), 813 to 833 (LVIC…AFVS), 849 to 869 (LLGY…CVLA), and 882 to 902 (IMFL…PVFL).

Belongs to the patched family. In terms of tissue distribution, expressed in germ cells of the testis (at protein level).

The protein resides in the cell projection. The protein localises to the cilium. Its subcellular location is the flagellum membrane. It localises to the endoplasmic reticulum membrane. Functionally, may play a role in sperm development or sperm function. However, does not appear to have an essential role in spermatogenesis or male fertility. This is Patched domain-containing protein 3 from Rattus norvegicus (Rat).